The sequence spans 357 residues: Ferrochelatase (357 aa).

Residues His-193 and Glu-272 each contribute to the Fe cation site.

The protein belongs to the ferrochelatase family.

It localises to the cytoplasm. It catalyses the reaction heme b + 2 H(+) = protoporphyrin IX + Fe(2+). It participates in porphyrin-containing compound metabolism; protoheme biosynthesis; protoheme from protoporphyrin-IX: step 1/1. In terms of biological role, catalyzes the ferrous insertion into protoporphyrin IX. The chain is Ferrochelatase from Hyphomonas neptunium (strain ATCC 15444).